We begin with the raw amino-acid sequence, 296 residues long: Isoprenyl transferase (296 aa).

Basic residues predominate over residues 1–11 (MATERNRRRKG). The interval 1–29 (MATERNRRRKGSYPQLPPAPDDYPTFPDK) is disordered. D76 is an active-site residue. D76 provides a ligand contact to Mg(2+). Substrate contacts are provided by residues 77–80 (GNGR), W81, R89, H93, and 121–123 (STE). N124 acts as the Proton acceptor in catalysis. Substrate-binding positions include W125, R127, R244, and 250–252 (RAS). E263 provides a ligand contact to Mg(2+).

It belongs to the UPP synthase family. In terms of assembly, homodimer. Requires Mg(2+) as cofactor.

Catalyzes the condensation of isopentenyl diphosphate (IPP) with allylic pyrophosphates generating different type of terpenoids. This chain is Isoprenyl transferase, found in Mycolicibacterium parafortuitum (Mycobacterium parafortuitum).